The following is a 268-amino-acid chain: Ribonuclease P protein subunit p30 (268 aa).

An N-acetylalanine modification is found at Ala-2. Position 251 is a phosphoserine (Ser-251).

Belongs to the eukaryotic/archaeal RNase P protein component 3 family. In terms of assembly, component of nuclear RNase P and RNase MRP ribonucleoproteins. RNase P consists of a catalytic RNA moiety and about 10 protein subunits; POP1, POP4, POP5, POP7, RPP14, RPP21, RPP25, RPP30, RPP38 and RPP40. Within the RNase P complex, POP1, POP7 and RPP25 form the 'finger' subcomplex, POP5, RPP14, RPP40 and homodimeric RPP30 form the 'palm' subcomplex, and RPP21, POP4 and RPP38 form the 'wrist' subcomplex. All subunits of the RNase P complex interact with the catalytic RNA. Several subunits of RNase P are also part of the RNase MRP complex. RNase MRP consists of a catalytic RNA moiety and about 8 protein subunits; POP1, POP7, RPP25, RPP30, RPP38, RPP40 and possibly also POP4 and POP5.

Its subcellular location is the nucleus. It is found in the nucleolus. Functionally, component of ribonuclease P, a ribonucleoprotein complex that generates mature tRNA molecules by cleaving their 5'-ends. Also a component of the MRP ribonuclease complex, which cleaves pre-rRNA sequences. In Mus musculus (Mouse), this protein is Ribonuclease P protein subunit p30 (Rpp30).